A 177-amino-acid chain; its full sequence is Large ribosomal subunit protein uL6 (177 aa).

It belongs to the universal ribosomal protein uL6 family. Part of the 50S ribosomal subunit.

Functionally, this protein binds to the 23S rRNA, and is important in its secondary structure. It is located near the subunit interface in the base of the L7/L12 stalk, and near the tRNA binding site of the peptidyltransferase center. The polypeptide is Large ribosomal subunit protein uL6 (Bordetella petrii (strain ATCC BAA-461 / DSM 12804 / CCUG 43448)).